A 243-amino-acid chain; its full sequence is Pyridoxine 5'-phosphate synthase (243 aa).

N9 is a 3-amino-2-oxopropyl phosphate binding site. 11-12 (DH) lines the 1-deoxy-D-xylulose 5-phosphate pocket. R20 is a 3-amino-2-oxopropyl phosphate binding site. H45 (proton acceptor) is an active-site residue. Positions 47 and 52 each coordinate 1-deoxy-D-xylulose 5-phosphate. E72 serves as the catalytic Proton acceptor. T102 contributes to the 1-deoxy-D-xylulose 5-phosphate binding site. H193 serves as the catalytic Proton donor. 3-amino-2-oxopropyl phosphate is bound by residues G194 and 215 to 216 (GH).

It belongs to the PNP synthase family. As to quaternary structure, homooctamer; tetramer of dimers.

The protein localises to the cytoplasm. The catalysed reaction is 3-amino-2-oxopropyl phosphate + 1-deoxy-D-xylulose 5-phosphate = pyridoxine 5'-phosphate + phosphate + 2 H2O + H(+). Its pathway is cofactor biosynthesis; pyridoxine 5'-phosphate biosynthesis; pyridoxine 5'-phosphate from D-erythrose 4-phosphate: step 5/5. Functionally, catalyzes the complicated ring closure reaction between the two acyclic compounds 1-deoxy-D-xylulose-5-phosphate (DXP) and 3-amino-2-oxopropyl phosphate (1-amino-acetone-3-phosphate or AAP) to form pyridoxine 5'-phosphate (PNP) and inorganic phosphate. This Photorhabdus laumondii subsp. laumondii (strain DSM 15139 / CIP 105565 / TT01) (Photorhabdus luminescens subsp. laumondii) protein is Pyridoxine 5'-phosphate synthase.